Reading from the N-terminus, the 115-residue chain is MDTSDNLARVGIRCSVRDLAPMVGNVPHFEQQQADYYNLFNLRRRKQPIQSAANFQNLFLIAALGSRGLTSAPLLGETLASIIYGEPLPISEGILHNLSANRAWVKKWLKGSKVE.

This is an uncharacterized protein from Haemophilus influenzae (strain ATCC 51907 / DSM 11121 / KW20 / Rd).